The sequence spans 420 residues: 5'-deoxyadenosine deaminase (420 aa).

Positions 55 and 57 each coordinate Zn(2+). 2 residues coordinate substrate: Glu84 and His176. Residue His203 participates in Zn(2+) binding. Substrate-binding residues include Glu206 and Asp292. Asp292 is a binding site for Zn(2+).

It belongs to the metallo-dependent hydrolases superfamily. MTA/SAH deaminase family. As to quaternary structure, homotetramer. Requires Zn(2+) as cofactor.

The enzyme catalyses 5'-deoxyadenosine + H2O + H(+) = 5'-deoxyinosine + NH4(+). It carries out the reaction S-adenosyl-L-homocysteine + H2O + H(+) = S-inosyl-L-homocysteine + NH4(+). It catalyses the reaction S-methyl-5'-thioadenosine + H2O + H(+) = S-methyl-5'-thioinosine + NH4(+). The catalysed reaction is adenosine + H2O + H(+) = inosine + NH4(+). Its pathway is amino-acid biosynthesis; S-adenosyl-L-methionine biosynthesis. In terms of biological role, catalyzes the deamination of three SAM-derived enzymatic products, namely 5'-deoxyadenosine, S-adenosyl-L-homocysteine, and 5'-methylthioadenosine, to produce the inosine analogs. Can also deaminate adenosine. The preferred substrate for this enzyme is 5'-deoxyadenosine, but all these substrates are efficiently deaminated. Likely functions in a S-adenosyl-L-methionine (SAM) recycling pathway from S-adenosyl-L-homocysteine (SAH) produced from SAM-dependent methylation reactions. May also be involved in the recycling of 5'-deoxyadenosine, whereupon the 5'-deoxyribose moiety of 5'-deoxyinosine is further metabolized to deoxyhexoses used for the biosynthesis of aromatic amino acids in methanogens. The polypeptide is 5'-deoxyadenosine deaminase (Methanocaldococcus jannaschii (strain ATCC 43067 / DSM 2661 / JAL-1 / JCM 10045 / NBRC 100440) (Methanococcus jannaschii)).